Reading from the N-terminus, the 152-residue chain is UPF0266 membrane protein KPN78578_23010 (152 aa).

The next 3 helical transmembrane spans lie at 6 to 26 (LVIILFILALLAYAIYDQFIM), 45 to 65 (VDGMIFVGLTAILIYNNITQH), and 67 to 87 (TAITTWLLSVLALMGLYLFWI).

It belongs to the UPF0266 family.

It localises to the cell inner membrane. This chain is UPF0266 membrane protein KPN78578_23010, found in Klebsiella pneumoniae subsp. pneumoniae (strain ATCC 700721 / MGH 78578).